We begin with the raw amino-acid sequence, 109 residues long: Nucleoid-associated protein MADE_1013280 (109 aa).

Positions 86-109 are disordered; the sequence is TSKEKMGDVTGGMPLPPGFKMPGF. Over residues 99–109 the composition is skewed to pro residues; that stretch reads PLPPGFKMPGF.

The protein belongs to the YbaB/EbfC family. In terms of assembly, homodimer.

The protein localises to the cytoplasm. The protein resides in the nucleoid. In terms of biological role, binds to DNA and alters its conformation. May be involved in regulation of gene expression, nucleoid organization and DNA protection. This chain is Nucleoid-associated protein MADE_1013280, found in Alteromonas mediterranea (strain DSM 17117 / CIP 110805 / LMG 28347 / Deep ecotype).